We begin with the raw amino-acid sequence, 226 residues long: EEF1A lysine methyltransferase 3 (226 aa).

S-adenosyl-L-methionine is bound by residues tryptophan 57, 83 to 85, aspartate 104, tryptophan 133, and alanine 150; that span reads GAG.

This sequence belongs to the methyltransferase superfamily. METTL21 family. In terms of assembly, interacts with members of the heat shock protein 70 and 90 families and of the TCP-1 chaperonin family, as well as with HSPD1, STIP1 and tubulin; at least some of these proteins may be methylation substrates.

It localises to the cytoplasm. Its subcellular location is the cytoskeleton. The protein localises to the microtubule organizing center. It is found in the centrosome. The enzyme catalyses L-lysyl-[protein] + 3 S-adenosyl-L-methionine = N(6),N(6),N(6)-trimethyl-L-lysyl-[protein] + 3 S-adenosyl-L-homocysteine + 3 H(+). It catalyses the reaction L-lysyl-[protein] + S-adenosyl-L-methionine = N(6)-methyl-L-lysyl-[protein] + S-adenosyl-L-homocysteine + H(+). It carries out the reaction N(6)-methyl-L-lysyl-[protein] + S-adenosyl-L-methionine = N(6),N(6)-dimethyl-L-lysyl-[protein] + S-adenosyl-L-homocysteine + H(+). The catalysed reaction is N(6),N(6)-dimethyl-L-lysyl-[protein] + S-adenosyl-L-methionine = N(6),N(6),N(6)-trimethyl-L-lysyl-[protein] + S-adenosyl-L-homocysteine + H(+). Its function is as follows. Protein-lysine methyltransferase that selectively mono-, di- and trimethylates 'Lys-165' of the translation elongation factors EEF1A1 and EEF1A2 in an aminoacyl-tRNA and GTP-dependent manner. EEF1A1 methylation by EEF1AKMT3 is dynamic as well as inducible by stress conditions, such as ER-stress, and plays a regulatory role on mRNA translation. This is EEF1A lysine methyltransferase 3 from Bos taurus (Bovine).